The sequence spans 690 residues: MAASTAAGKQRIPKVAKVKNKAPAEVQITAEQLLREAKERELELLPPPPQQKITDEEELNDYKLRKRKTFEDNIRKNRTVISNWIKYAQWEESLKEIQRARSIYERALDVDYRNITLWLKYAEMEMKNRQVNHARNIWDRAITTLPRVNQFWYKYTYMEEMLGNVAGARQVFERWMEWQPEEQAWHSYINFELRYKEVERARTIYERFVLVHPAVKNWIKYARFEEKHAYFAHARKVYERAVEFFGDEHMDEHLYVAFAKFEENQKEFERVRVIYKYALDRISKQEAQELFKNYTIFEKKFGDRRGIEDIIVSKRRFQYEEEVKANPHNYDAWFDYLRLVESDAEADTVREVYERAIANVPPIQEKRHWKRYIYLWVNYALYEELEAKDPERTRQVYQASLELIPHKKFTFAKMWLYYAQFEIRQKNLPFARRALGTSIGKCPKNKLFKGYIELELQLREFDRCRKLYEKFLEFGPENCTSWIKFAELETILGDIERARAIYELAISQPRLDMPEVLWKSYIDFEIEQEETERTRNLYRQLLQRTQHVKVWISFAQFELSSGKEGSVAKCRQIYEEANKTMRNCEEKEERLMLLESWRSFEDEFGTVSDKERVDKLMPEKVKKRRKVQADDGSDAGWEEYYDYIFPEDAANQPNLKLLAMAKLWKKQQQEREAAEQDPDKDIDESESSSF.

16 HAT repeats span residues 61–93 (DYKL…WEES), 95–127 (KEIQ…MEMK), 129–161 (RQVN…MEEM), 163–194 (GNVA…FELR), 196–227 (KEVE…FEEK), 229–264 (AYFA…FEEN), 266–300 (KEFE…FEKK), 310–342 (IIVS…LVES), 344–378 (AEAD…LWVN), 388–424 (KDPE…FEIR), 459–491 (REFD…LETI), 493–527 (GDIE…FEIE), 529–560 (EETE…FELS), 565–606 (GSVA…EFGT), 608–646 (SDKE…YIFP), and 648–673 (DAAN…EREA). The interval 250–467 (MDEHLYVAFA…LREFDRCRKL (218 aa)) is mediates interaction with HSP90. At Ser342 the chain carries Phosphoserine. Residues 618 to 626 (PEKVKKRRK) carry the Nuclear localization signal motif. The span at 667–679 (QQQEREAAEQDPD) shows a compositional bias: basic and acidic residues. Positions 667–690 (QQQEREAAEQDPDKDIDESESSSF) are disordered. Positions 680–690 (KDIDESESSSF) are enriched in acidic residues. Residue Ser689 is modified to Phosphoserine.

It belongs to the crooked-neck family. Identified in the spliceosome C complex. Present in a spliceosome complex assembled in vitro containing CRNKL1, HPRP8BP and SNRPB2. Component of the minor spliceosome, which splices U12-type introns. Interacts with PPIL2 (via the PPIase cyclophilin-type domain); they may form a trimeric complex with HSP90.

The protein resides in the nucleus. The protein localises to the nucleus speckle. Its function is as follows. Involved in pre-mRNA splicing process. As a component of the minor spliceosome, involved in the splicing of U12-type introns in pre-mRNAs. This is Crooked neck-like protein 1 (Crnkl1) from Mus musculus (Mouse).